Consider the following 257-residue polypeptide: Transcription factor GHD7 (257 aa).

Ser68 bears the Phosphoserine; by CK1 mark. The 43-residue stretch at 190–232 (REAKLMRYKEKRKKRCYEKQIRYASRKAYAEMRPRVRGRFAKE) folds into the CCT domain. The short motif at 198 to 204 (KEKRKKR) is the Nuclear localization signal element. Positions 226–245 (RGRFAKEPDQEAVAPPSTYV) are disordered.

In terms of assembly, interacts with HD16/EL1. In terms of processing, phosphorylated at Ser-68 by HD16/EL1, a casein kinase 1. In terms of tissue distribution, expressed in the apical meristem, developing leaves, leaf sheaths of young seedling, root meristem, epidermal layer of developing stems and branch-primordia of developing panicles.

It is found in the nucleus. Its function is as follows. Probable transcription factor involved in the regulation of flowering time under long day (LD) conditions. Plays a major role as repressor of flowering. Controls flowering time by negatively regulating the expression of EHD1 and HD3A. The polypeptide is Transcription factor GHD7 (Oryza sativa subsp. japonica (Rice)).